The following is a 505-amino-acid chain: Hexose transporter 1 (505 aa).

Topologically, residues Met-1 to Ser-27 are cytoplasmic. A helical membrane pass occupies residues Phe-28–Leu-48. At Asn-49–Ser-78 the chain is on the extracellular side. A disulfide bridge links Cys-62 with Cys-70. The helical transmembrane segment at Phe-79 to Val-99 threads the bilayer. Residues Lys-100–Arg-104 are Cytoplasmic-facing. The chain crosses the membrane as a helical span at residues Phe-105–His-125. The Extracellular portion of the chain corresponds to His-126–Arg-134. Residues Leu-135–Met-155 traverse the membrane as a helical segment. The Cytoplasmic segment spans residues Thr-156 to Gly-165. Residues Val-166–Leu-186 traverse the membrane as a helical segment. Gln-169 provides a ligand contact to alpha-D-glucose. Residue Gln-169 coordinates beta-D-glucose. The Extracellular segment spans residues Gly-187–Arg-208. The helical transmembrane segment at Phe-209 to Tyr-229 threads the bilayer. At Lys-230–Asn-294 the chain is on the cytoplasmic side. Residues Val-295–Val-315 form a helical membrane-spanning segment. Residues Gln-306, Gln-307, and Asn-312 each coordinate alpha-D-glucose. Position 306 (Gln-306) interacts with beta-D-glucose. Residue Asn-312 coordinates beta-D-glucose. At Ala-316–Thr-332 the chain is on the extracellular side. Residues Ile-333 to Ile-353 form a helical membrane-spanning segment. Residue Asn-342 participates in beta-D-glucose binding. The Cytoplasmic segment spans residues Glu-354 to Arg-358. Residues Lys-359–Ala-379 traverse the membrane as a helical segment. The Extracellular segment spans residues Arg-380–Ser-393. A helical membrane pass occupies residues Ile-394 to Ile-414. Position 413 (Trp-413) interacts with alpha-D-glucose. The Cytoplasmic portion of the chain corresponds to Tyr-415–Ser-430. Residues Leu-431–Ile-451 traverse the membrane as a helical segment. The Extracellular segment spans residues Lys-452–Ser-456. The helical transmembrane segment at Ile-457–Ile-477 threads the bilayer. Topologically, residues Lys-478–Val-505 are cytoplasmic.

The protein belongs to the major facilitator superfamily. Sugar transporter (TC 2.A.1.1) family. As to quaternary structure, homodimer.

The protein resides in the cell membrane. It carries out the reaction D-glucose(out) = D-glucose(in). The catalysed reaction is D-fructose(out) = D-fructose(in). The enzyme catalyses D-galactose(in) = D-galactose(out). It catalyses the reaction D-mannose(out) = D-mannose(in). It carries out the reaction D-glucosamine(out) = D-glucosamine(in). The catalysed reaction is D-xylose(out) = D-xylose(in). Its activity is regulated as follows. Inhibited by cytochalasin B. Sodium-independent facilitative hexose transporter. Can transport D-glucose and D-fructose. Can transport D-mannose, D-galactose, D-xylose and D-glucosamine. The chain is Hexose transporter 1 from Plasmodium yoelii yoelii.